We begin with the raw amino-acid sequence, 195 residues long: Imidazoleglycerol-phosphate dehydratase (195 aa).

The protein belongs to the imidazoleglycerol-phosphate dehydratase family.

The protein resides in the cytoplasm. The enzyme catalyses D-erythro-1-(imidazol-4-yl)glycerol 3-phosphate = 3-(imidazol-4-yl)-2-oxopropyl phosphate + H2O. It participates in amino-acid biosynthesis; L-histidine biosynthesis; L-histidine from 5-phospho-alpha-D-ribose 1-diphosphate: step 6/9. The sequence is that of Imidazoleglycerol-phosphate dehydratase from Paracoccus denitrificans (strain Pd 1222).